Reading from the N-terminus, the 621-residue chain is Chaperone protein HscA homolog (621 aa).

The protein belongs to the heat shock protein 70 family.

Functionally, chaperone involved in the maturation of iron-sulfur cluster-containing proteins. Has a low intrinsic ATPase activity which is markedly stimulated by HscB. The polypeptide is Chaperone protein HscA homolog (Cupriavidus necator (strain ATCC 17699 / DSM 428 / KCTC 22496 / NCIMB 10442 / H16 / Stanier 337) (Ralstonia eutropha)).